The sequence spans 257 residues: Flagellar brake protein YcgR 1 (257 aa).

The span at 1 to 18 shows a compositional bias: polar residues; the sequence is MDTTQSNGQTDTQGQLHA. The disordered stretch occupies residues 1 to 30; that stretch reads MDTTQSNGQTDTQGQLHAQTAEGGNDFGRR. In terms of domain architecture, PilZ spans 133-246; the sequence is QRREYFRVDA…AENTLQRLIT (114 aa).

It belongs to the YcgR family. In terms of assembly, monomer. Interacts with the flagellar basal bodies.

It localises to the bacterial flagellum basal body. Its function is as follows. Acts as a flagellar brake, regulating swimming and swarming in a bis-(3'-5') cyclic diguanylic acid (c-di-GMP)-dependent manner. Binds 1 c-di-GMP dimer per subunit. Increasing levels of c-di-GMP lead to decreased motility. The chain is Flagellar brake protein YcgR 1 from Paraburkholderia phytofirmans (strain DSM 17436 / LMG 22146 / PsJN) (Burkholderia phytofirmans).